The sequence spans 54 residues: Ovomucoid (54 aa).

Residues valine 4–cysteine 54 form the Kazal-like domain. Cystine bridges form between cysteine 6–cysteine 36, cysteine 14–cysteine 33, and cysteine 22–cysteine 54. Asparagine 43 is a glycosylation site (N-linked (GlcNAc...) asparagine).

It is found in the secreted. The sequence is that of Ovomucoid from Casuarius casuarius (Southern cassowary).